Here is a 362-residue protein sequence, read N- to C-terminus: Lactosylceramide alpha-2,3-sialyltransferase (362 aa).

The Cytoplasmic segment spans residues 1–5 (MRRPS). The helical; Signal-anchor for type II membrane protein transmembrane segment at 6–26 (LLLKDILKCTLLVFGVWILYI) threads the bilayer. The Lumenal portion of the chain corresponds to 27 to 362 (LKLNYTTEEC…DLSGGIDREF (336 aa)). N-linked (GlcNAc...) asparagine glycosylation is found at Asn30, Asn180, Asn224, and Asn334. The cysteines at positions 139 and 297 are disulfide-linked.

The protein belongs to the glycosyltransferase 29 family.

The protein localises to the golgi apparatus membrane. It carries out the reaction a beta-D-Gal-(1-&gt;4)-beta-D-Glc-(1&lt;-&gt;1)-Cer(d18:1(4E)) + CMP-N-acetyl-beta-neuraminate = a ganglioside GM3 (d18:1(4E)) + CMP + H(+). The catalysed reaction is ganglioside GA2 (d18:1(4E)/18:0) + CMP-N-acetyl-beta-neuraminate = ganglioside GM2 (d18:1(4E)/18:0) + CMP + H(+). It catalyses the reaction a beta-D-Gal-(1&lt;-&gt;1')-ceramide + CMP-N-acetyl-beta-neuraminate = N-acetyl-alpha-neuraminosyl-(2-&gt;3)-beta-D-galactosyl-(1&lt;-&gt;1')-ceramide + CMP + H(+). The enzyme catalyses ganglioside GA1 (d18:1(4E)/18:0) + CMP-N-acetyl-beta-neuraminate = ganglioside GM1 (d18:1(4E)/18:0) + CMP + H(+). Transfers the sialyl group (N-acetyl-alpha-neuraminyl or NeuAc) from CMP-NeuAc to the non-reducing terminal galactose (Gal) of glycosphingolipids forming gangliosides (important molecules involved in the regulation of multiple cellular processes, including cell proliferation and differentiation, apoptosis, embryogenesis, development, and oncogenesis). Mainly involved in the biosynthesis of ganglioside GM3 but can also use different glycolipids as substrate acceptors such as D-galactosylceramide (GalCer), asialo-GM2 (GA2) and asialo-GM1 (GA1), although less preferentially than beta-D-Gal-(1-&gt;4)-beta-D-Glc-(1&lt;-&gt;1)-Cer (LacCer). The sequence is that of Lactosylceramide alpha-2,3-sialyltransferase (ST3GAL5) from Pan troglodytes (Chimpanzee).